The sequence spans 150 residues: Ribosome-binding factor A (150 aa).

Residues 119-150 are disordered; the sequence is VAERAKSAQPAGEPDPYRFDGAAAADDDEPAT.

The protein belongs to the RbfA family. Monomer. Binds 30S ribosomal subunits, but not 50S ribosomal subunits or 70S ribosomes.

It localises to the cytoplasm. Functionally, one of several proteins that assist in the late maturation steps of the functional core of the 30S ribosomal subunit. Associates with free 30S ribosomal subunits (but not with 30S subunits that are part of 70S ribosomes or polysomes). Required for efficient processing of 16S rRNA. May interact with the 5'-terminal helix region of 16S rRNA. This Acidothermus cellulolyticus (strain ATCC 43068 / DSM 8971 / 11B) protein is Ribosome-binding factor A.